Consider the following 292-residue polypeptide: ATP synthase gamma chain (292 aa).

It belongs to the ATPase gamma chain family. F-type ATPases have 2 components, CF(1) - the catalytic core - and CF(0) - the membrane proton channel. CF(1) has five subunits: alpha(3), beta(3), gamma(1), delta(1), epsilon(1). CF(0) has three main subunits: a, b and c.

The protein resides in the cell inner membrane. Functionally, produces ATP from ADP in the presence of a proton gradient across the membrane. The gamma chain is believed to be important in regulating ATPase activity and the flow of protons through the CF(0) complex. This is ATP synthase gamma chain from Methylobacterium sp. (strain 4-46).